The following is a 191-amino-acid chain: uncharacterized protein (191 aa).

This is an uncharacterized protein from Acanthamoeba polyphaga (Amoeba).